Here is a 511-residue protein sequence, read N- to C-terminus: Maturase K (511 aa).

The protein belongs to the intron maturase 2 family. MatK subfamily.

Its subcellular location is the plastid. It localises to the chloroplast. Usually encoded in the trnK tRNA gene intron. Probably assists in splicing its own and other chloroplast group II introns. The protein is Maturase K of Primula veris (Cowslip).